Reading from the N-terminus, the 245-residue chain is Adapter protein MecA (245 aa).

Belongs to the MecA family. Homodimer.

In terms of biological role, enables the recognition and targeting of unfolded and aggregated proteins to the ClpC protease or to other proteins involved in proteolysis. The protein is Adapter protein MecA of Streptococcus pneumoniae (strain Hungary19A-6).